Reading from the N-terminus, the 359-residue chain is 4-hydroxy-3-methylbut-2-en-1-yl diphosphate synthase (flavodoxin) (359 aa).

[4Fe-4S] cluster-binding residues include cysteine 264, cysteine 267, cysteine 299, and glutamate 306.

Belongs to the IspG family. It depends on [4Fe-4S] cluster as a cofactor.

The catalysed reaction is (2E)-4-hydroxy-3-methylbut-2-enyl diphosphate + oxidized [flavodoxin] + H2O + 2 H(+) = 2-C-methyl-D-erythritol 2,4-cyclic diphosphate + reduced [flavodoxin]. It participates in isoprenoid biosynthesis; isopentenyl diphosphate biosynthesis via DXP pathway; isopentenyl diphosphate from 1-deoxy-D-xylulose 5-phosphate: step 5/6. Functionally, converts 2C-methyl-D-erythritol 2,4-cyclodiphosphate (ME-2,4cPP) into 1-hydroxy-2-methyl-2-(E)-butenyl 4-diphosphate. The polypeptide is 4-hydroxy-3-methylbut-2-en-1-yl diphosphate synthase (flavodoxin) (Helicobacter pylori (strain J99 / ATCC 700824) (Campylobacter pylori J99)).